The chain runs to 1176 residues: Leucine--tRNA ligase, cytoplasmic (1176 aa).

The L-leucine site is built by Y52 and Y54. The 'HIGH' region signature appears at H60 to H63. S167 carries the post-translational modification Phosphoserine. An editing domain region spans residues G260–E509. L-leucine contacts are provided by L594 and S597. Positions K716–S720 match the 'KMSKS' region motif. Residue K719 coordinates ATP. Phosphoserine is present on S720. An N6-acetyllysine mark is found at K970 and K1047.

This sequence belongs to the class-I aminoacyl-tRNA synthetase family. In terms of assembly, part of the aminoacyl-tRNA synthetase multienzyme complex, also known as multisynthetase complex (MSC), that is composed of the aminoacyl-tRNA ligases for Arg (RARS1), Asp (DARS1), Gln (QARS1), Ile (IARS1), Leu (LARS1), Lys (KARS1), Met (MARS1) the bifunctional ligase for Glu and Pro (EPRS1) and the auxiliary subunits AIMP1/p43, AIMP2/p38 and EEF1E1/p18.

Its subcellular location is the cytoplasm. It catalyses the reaction tRNA(Leu) + L-leucine + ATP = L-leucyl-tRNA(Leu) + AMP + diphosphate. The catalysed reaction is L-methionyl-tRNA(Leu) + H2O = tRNA(Leu) + L-methionine + H(+). With respect to regulation, 5-fluoro-1,3-dihydro-1-hydroxy-1,2-benzoxaborole inhibits LARS1 by forming a covalent adduct with the 3' adenosine of tRNA(Leu) at the editing site, thus locking the enzyme in an inactive conformation. Its function is as follows. Aminoacyl-tRNA synthetase that catalyzes the specific attachment of leucine to its cognate tRNA (tRNA(Leu)). It performs tRNA aminoacylation in a two-step reaction: Leu is initially activated by ATP to form a leucyl-adenylate (Leu-AMP) intermediate; then the leucyl moiety is transferred to the acceptor 3' end of the tRNA to yield leucyl-tRNA. To improve the fidelity of catalytic reactions, it is also able to hydrolyze misactivated aminoacyl-adenylate intermediates (pre-transfer editing) and mischarged aminoacyl-tRNAs (post-transfer editing). This chain is Leucine--tRNA ligase, cytoplasmic, found in Homo sapiens (Human).